The following is a 100-amino-acid chain: uncharacterized protein (100 aa).

The region spanning 8–100 (MKQSDDQIRA…TYLPGFLETL (93 aa)) is the HTH arsR-type domain. A DNA-binding region (H-T-H motif) is located at residues 44–67 (CGEVGEKCNIVKTTASYHFKTLRE).

This is an uncharacterized protein from Bacillus subtilis (strain 168).